A 3391-amino-acid polypeptide reads, in one-letter code: Genome polyprotein (3391 aa).

The interaction with host EXOC1 stretch occupies residues 1–15 (MNNQRKKARSTPFNM). Residues 1-101 (MNNQRKKARS…LNILNRRRRT (101 aa)) are Cytoplasmic-facing. Positions 37–72 (MLQGRGPLKLFMALVAFLRFLTIPPTAGILKRWGTI) are hydrophobic; homodimerization of capsid protein C. Positions 101–114 (TAGVIIMLIPTAMA) are cleaved as a propeptide — ER anchor for the capsid protein C, removed in mature form by serine protease NS3. A helical transmembrane segment spans residues 102 to 119 (AGVIIMLIPTAMAFHLTT). Residues 120–241 (RNGEPHMIVG…KHVQRIETWI (122 aa)) are Extracellular-facing. An N-linked (GlcNAc...) asparagine; by host glycan is attached at asparagine 183. The helical transmembrane segment at 242 to 259 (LRHPGFTIMAAILAYTIG) threads the bilayer. Residues 260 to 265 (TTHFQR) lie on the Cytoplasmic side of the membrane. Residues 266 to 280 (ALIFILLTAVAPSMT) form a helical membrane-spanning segment. At 281-725 (MRCIGISNRD…LHQVFGAIYG (445 aa)) the chain is on the extracellular side. 4 cysteine pairs are disulfide-bonded: cysteine 283-cysteine 310, cysteine 340-cysteine 401, cysteine 354-cysteine 385, and cysteine 372-cysteine 396. An N-linked (GlcNAc...) asparagine; by host glycan is attached at asparagine 347. The tract at residues 378–391 (DRGWGNGCGLFGKG) is fusion peptide. Asparagine 433 is a glycosylation site (N-linked (GlcNAc...) asparagine; by host). 2 cysteine pairs are disulfide-bonded: cysteine 465–cysteine 565 and cysteine 582–cysteine 613. A helical transmembrane segment spans residues 726–746 (AAFSGVSWTMKILIGVIITWI). At 747–752 (GMNSRS) the chain is on the cytoplasmic side. Residues 753–773 (TSLSVSLVLVGVVTLYLGAMV) form a helical membrane-spanning segment. Residues 774 to 1195 (QADSGCVVSW…MVGATMTDDI (422 aa)) lie on the Extracellular side of the membrane. 6 disulfide bridges follow: cysteine 779–cysteine 790, cysteine 830–cysteine 918, cysteine 954–cysteine 998, cysteine 1055–cysteine 1104, cysteine 1066–cysteine 1088, and cysteine 1087–cysteine 1091. Residues asparagine 905 and asparagine 982 are each glycosylated (N-linked (GlcNAc...) asparagine; by host). N-linked (GlcNAc...) asparagine; by host glycosylation occurs at asparagine 1134. A helical transmembrane segment spans residues 1196 to 1220 (GMGVTYLALLAAFKVRPTFAAGLLL). Residues 1221-1226 (RKLTSK) lie on the Cytoplasmic side of the membrane. A helical membrane pass occupies residues 1227 to 1245 (ELMMATIGIALLSQSTIPE). The Lumenal portion of the chain corresponds to 1246-1269 (TILELTDALALGMMVLKIVRNMEK). Residues 1270–1290 (YQLAVTIMAILCVPNAVILQN) form a helical membrane-spanning segment. Alanine 1291 is a topological domain (cytoplasmic). The chain crosses the membrane as a helical span at residues 1292–1310 (WKVSCTILAAVSVSPLLLT). At 1311 to 1317 (SSQQKAD) the chain is on the lumenal side. Residues 1318–1338 (WIPLALTIKGLNPTAIFLTTL) traverse the membrane as a helical segment. At 1339–1346 (SRTSKKRS) the chain is on the cytoplasmic side. A helical membrane pass occupies residues 1347–1367 (WPLNEAIMAVGMVSILASSLL). Residues 1368-1370 (KND) lie on the Lumenal side of the membrane. The helical transmembrane segment at 1371-1391 (IPMTGPLVAGGLLTVCYVLTG) threads the bilayer. Residues 1392-1447 (RSADLELERAADVKWEDQAEISGSSPILSITISEDGSMSIKNEEEEQTLTILIRTG) lie on the Cytoplasmic side of the membrane. Positions 1398–1437 (LERAADVKWEDQAEISGSSPILSITISEDGSMSIKNEEEE) are interacts with and activates NS3 protease. Residues 1448–1468 (LLVISGVFPVSIPITAAAWYL) constitute an intramembrane region (helical). The Cytoplasmic segment spans residues 1469–2147 (WEVKKQRAGV…LSELPETLET (679 aa)). One can recognise a Peptidase S7 domain in the interval 1476–1653 (AGVLWDVPSP…EKSIEDNPEI (178 aa)). Residues histidine 1526, aspartate 1550, and serine 1610 each act as charge relay system; for serine protease NS3 activity in the active site. The Helicase ATP-binding domain occupies 1655 to 1811 (DDIFRKKRLT…QSNAPIMDEE (157 aa)). The interval 1659–1662 (RKKR) is important for RNA-binding. 1668–1675 (LHPGAGKT) serves as a coordination point for ATP. The DEAH box motif lies at 1759-1762 (DEAH). In terms of domain architecture, Helicase C-terminal spans 1821 to 1988 (SGHEWVTDFK…IIPSMFEPER (168 aa)). N6-acetyllysine; by host is present on lysine 1863. Residues 2148-2168 (LLLLTLLATVTGGIFLFLMSG) traverse the membrane as a helical segment. The Lumenal portion of the chain corresponds to 2169–2170 (KG). An intramembrane region (helical) is located at residues 2171 to 2191 (IGKMTLGMCCIITASILLWYA). Residue glutamine 2192 is a topological domain, lumenal. A helical membrane pass occupies residues 2193–2213 (IQPHWIAASIILEFFLIVLLI). The Cytoplasmic segment spans residues 2214-2228 (PEPEKQRTPQDNQLT). The chain crosses the membrane as a helical span at residues 2229–2249 (YVVIAILTVVAATMANEMGFL). At 2250–2274 (EKTKKDLGLGSITTQESESNILDID) the chain is on the lumenal side. The helical intramembrane region spans 2275 to 2295 (LRPASAWTLYAVATTFVTPML). Residues 2296–2316 (RHSIENSSVNVSLTAIANQAT) are Lumenal-facing. Asparagine 2301 and asparagine 2305 each carry an N-linked (GlcNAc...) asparagine; by host glycan. An intramembrane region (helical) is located at residues 2317 to 2337 (VLMGLGKGWPLSKIHIGVPLL). The Lumenal segment spans residues 2338-2347 (AIGCYSQVNP). Residues 2348 to 2368 (ITLTAALLLLVAHYAIIGPGL) form a helical membrane-spanning segment. Residues 2369–2413 (QAKATREAQKRAAAGIMKNPTVDGITVIDLDPIPYDPKFEKQLGQ) lie on the Cytoplasmic side of the membrane. Residues 2414-2434 (VMLLILCVTQVLMMRTTWALC) form a helical membrane-spanning segment. Over 2435-2459 (EALTLATGPISTLWEGNPGRFWNTT) the chain is Lumenal. The N-linked (GlcNAc...) asparagine; by host glycan is linked to asparagine 2457. The chain crosses the membrane as a helical span at residues 2460–2480 (IAVSMANIFRGSYLAGAGLLF). The Cytoplasmic segment spans residues 2481–3391 (SIMKNTTNTR…REEEEAGVLW (911 aa)). One can recognise an mRNA cap 0-1 NS5-type MT domain in the interval 2493–2755 (TGNIGETLGE…DVDLGSGTRN (263 aa)). Serine 2547 is a binding site for S-adenosyl-L-methionine. At serine 2547 the chain carries Phosphoserine. Lysine 2552 acts as the For 2'-O-MTase activity in catalysis. The short motif at 2568–2571 (VVDL) is the SUMO-interacting motif element. Residues glycine 2577, tryptophan 2578, threonine 2595, lysine 2596, aspartate 2622, and valine 2623 each coordinate S-adenosyl-L-methionine. Catalysis depends on aspartate 2637, which acts as the For 2'-O-MTase activity. S-adenosyl-L-methionine is bound at residue isoleucine 2638. Catalysis depends on for 2'-O-MTase activity residues lysine 2672 and glutamate 2708. Residue tyrosine 2710 participates in S-adenosyl-L-methionine binding. Residues glutamate 2929, histidine 2933, cysteine 2938, and cysteine 2941 each contribute to the Zn(2+) site. Residues 3020–3169 (AMYADDTAGW…PLDDRFASAL (150 aa)) form the RdRp catalytic domain. Residues histidine 3203, cysteine 3219, and cysteine 3338 each contribute to the Zn(2+) site.

This sequence in the N-terminal section; belongs to the class I-like SAM-binding methyltransferase superfamily. mRNA cap 0-1 NS5-type methyltransferase family. Homodimer. Interacts (via N-terminus) with host EXOC1 (via C-terminus); this interaction results in EXOC1 degradation through the proteasome degradation pathway. As to quaternary structure, forms heterodimers with envelope protein E in the endoplasmic reticulum and Golgi. In terms of assembly, homodimer; in the endoplasmic reticulum and Golgi. Interacts with protein prM. Interacts with non-structural protein 1. Homodimer; Homohexamer when secreted. Interacts with envelope protein E. Interacts with host PRKAA1. As to quaternary structure, interacts (via N-terminus) with serine protease NS3. In terms of assembly, forms a heterodimer with serine protease NS3. May form homooligomers. Forms a heterodimer with NS2B. Interacts with NS4B. Interacts with unphosphorylated RNA-directed RNA polymerase NS5; this interaction stimulates RNA-directed RNA polymerase NS5 guanylyltransferase activity. Interacts with host SHFL. As to quaternary structure, interacts with host MAVS; this interaction inhibits the synthesis of IFN-beta. Interacts with host SHFL. Interacts with host AUP1; the interaction occurs in the presence of Dengue virus NS4B and induces lipophagy which facilitates production of virus progeny particles. May interact with host SRPRA and SEC61G. In terms of assembly, interacts with serine protease NS3. Homodimer. Interacts with host STAT2; this interaction inhibits the phosphorylation of the latter, and, when all viral proteins are present (polyprotein), targets STAT2 for degradation. Interacts with serine protease NS3. Interacts with host PAF1 complex; the interaction may prevent the recruitment of the PAF1 complex to interferon-responsive genes, and thus reduces the immune response. Specific enzymatic cleavages in vivo yield mature proteins. Cleavages in the lumen of endoplasmic reticulum are performed by host signal peptidase, whereas cleavages in the cytoplasmic side are performed by serine protease NS3. Signal cleavage at the 2K-4B site requires a prior NS3 protease-mediated cleavage at the 4A-2K site. Post-translationally, cleaved in post-Golgi vesicles by a host furin, releasing the mature small envelope protein M, and peptide pr. This cleavage is incomplete as up to 30% of viral particles still carry uncleaved prM. In terms of processing, N-glycosylated. N-glycosylated. The excreted form is glycosylated and this is required for efficient secretion of the protein from infected cells. Post-translationally, acetylated by host KAT5. Acetylation modulates NS3 RNA-binding and unwinding activities and plays an important positive role for viral replication. In terms of processing, sumoylation of RNA-directed RNA polymerase NS5 increases NS5 protein stability allowing proper viral RNA replication. Phosphorylated on serines residues. This phosphorylation may trigger NS5 nuclear localization.

Its subcellular location is the virion. The protein resides in the host nucleus. The protein localises to the host cytoplasm. It localises to the host perinuclear region. It is found in the secreted. Its subcellular location is the virion membrane. The protein resides in the host endoplasmic reticulum membrane. The protein localises to the host mitochondrion. It catalyses the reaction Selective hydrolysis of -Xaa-Xaa-|-Yaa- bonds in which each of the Xaa can be either Arg or Lys and Yaa can be either Ser or Ala.. It carries out the reaction RNA(n) + a ribonucleoside 5'-triphosphate = RNA(n+1) + diphosphate. The catalysed reaction is a ribonucleoside 5'-triphosphate + H2O = a ribonucleoside 5'-diphosphate + phosphate + H(+). The enzyme catalyses ATP + H2O = ADP + phosphate + H(+). It catalyses the reaction a 5'-end (5'-triphosphoguanosine)-ribonucleoside in mRNA + S-adenosyl-L-methionine = a 5'-end (N(7)-methyl 5'-triphosphoguanosine)-ribonucleoside in mRNA + S-adenosyl-L-homocysteine. It carries out the reaction a 5'-end (N(7)-methyl 5'-triphosphoguanosine)-ribonucleoside in mRNA + S-adenosyl-L-methionine = a 5'-end (N(7)-methyl 5'-triphosphoguanosine)-(2'-O-methyl-ribonucleoside) in mRNA + S-adenosyl-L-homocysteine + H(+). In terms of biological role, plays a role in virus budding by binding to the cell membrane and gathering the viral RNA into a nucleocapsid that forms the core of a mature virus particle. During virus entry, may induce genome penetration into the host cytoplasm after hemifusion induced by the surface proteins. Can migrate to the cell nucleus where it modulates host functions. Overcomes the anti-viral effects of host EXOC1 by sequestering and degrading the latter through the proteasome degradation pathway. Inhibits RNA silencing by interfering with host Dicer. Functionally, prevents premature fusion activity of envelope proteins in trans-Golgi by binding to envelope protein E at pH6.0. After virion release in extracellular space, gets dissociated from E dimers. Its function is as follows. Acts as a chaperone for envelope protein E during intracellular virion assembly by masking and inactivating envelope protein E fusion peptide. prM is the only viral peptide matured by host furin in the trans-Golgi network probably to avoid catastrophic activation of the viral fusion activity in acidic Golgi compartment prior to virion release. prM-E cleavage is inefficient, and many virions are only partially matured. These uncleaved prM would play a role in immune evasion. In terms of biological role, may play a role in virus budding. Exerts cytotoxic effects by activating a mitochondrial apoptotic pathway through M ectodomain. May display a viroporin activity. Binds to host cell surface receptor and mediates fusion between viral and cellular membranes. Envelope protein is synthesized in the endoplasmic reticulum in the form of heterodimer with protein prM. They play a role in virion budding in the ER, and the newly formed immature particle is covered with 60 spikes composed of heterodimer between precursor prM and envelope protein E. The virion is transported to the Golgi apparatus where the low pH causes dissociation of PrM-E heterodimers and formation of E homodimers. prM-E cleavage is inefficient, and many virions are only partially matured. These uncleaved prM would play a role in immune evasion. Functionally, involved in immune evasion, pathogenesis and viral replication. Once cleaved off the polyprotein, is targeted to three destinations: the viral replication cycle, the plasma membrane and the extracellular compartment. Essential for viral replication. Required for formation of the replication complex and recruitment of other non-structural proteins to the ER-derived membrane structures. Excreted as a hexameric lipoparticle that plays a role against host immune response. Antagonizing the complement function. Binds to the host macrophages and dendritic cells. Inhibits signal transduction originating from Toll-like receptor 3 (TLR3). Its function is as follows. Involved in immune evasion, pathogenesis and viral replication. Once cleaved off the polyprotein, is targeted to three destinations: the viral replication cycle, the plasma membrane and the extracellular compartment. Essential for viral replication. Required for formation of the replication complex and recruitment of other non-structural proteins to the ER-derived membrane structures. Excreted as a hexameric lipoparticle that plays a role against host immune response. Antagonizing the complement function. Binds to the host macrophages and dendritic cells. Inhibits signal transduction originating from Toll-like receptor 3 (TLR3). Mediates complement activation, which may contribute to the pathogenesis of the vascular leakage that occurs in severe dengue disease. Activates autophagy through the AMPK/ERK/mTOR signaling pathway. Mechanistically, acts as the assembly platform for STK11-AMPK interactions and promotes STK11-AMPK interactions. In turn, promotes phosphorylation of the AMPK kinase structural domain and activates AMPK, thereby positively regulating the AMPK/ERK/mTOR signaling pathway and inducing autophagy. In terms of biological role, component of the viral RNA replication complex that functions in virion assembly and antagonizes the host immune response. Required cofactor for the serine protease function of NS3. May have membrane-destabilizing activity and form viroporins. Functionally, displays three enzymatic activities: serine protease, NTPase and RNA helicase. NS3 serine protease, in association with NS2B, performs its autocleavage and cleaves the polyprotein at dibasic sites in the cytoplasm: C-prM, NS2A-NS2B, NS2B-NS3, NS3-NS4A, NS4A-2K and NS4B-NS5. NS3 RNA helicase binds RNA and unwinds dsRNA in the 3' to 5' direction. Its function is as follows. Regulates the ATPase activity of the NS3 helicase activity. NS4A allows NS3 helicase to conserve energy during unwinding. Plays a role in the inhibition of the host innate immune response. Interacts with host MAVS and thereby prevents the interaction between RIGI and MAVS. In turn, IFN-beta production is impaired. Interacts with host AUP1 which mediates induction of lipophagy in host cells and facilitates production of virus progeny particles. In terms of biological role, functions as a signal peptide for NS4B and is required for the interferon antagonism activity of the latter. Induces the formation of ER-derived membrane vesicles where the viral replication takes place. Inhibits interferon (IFN)-induced host STAT1 phosphorylation and nuclear translocation, thereby preventing the establishment of cellular antiviral state by blocking the IFN-alpha/beta pathway. Functionally, replicates the viral (+) and (-) RNA genome, and performs the capping of genomes in the cytoplasm. NS5 methylates viral RNA cap at guanine N-7 and ribose 2'-O positions. Besides its role in RNA genome replication, also prevents the establishment of cellular antiviral state by blocking the interferon-alpha/beta (IFN-alpha/beta) signaling pathway. Inhibits host TYK2 and STAT2 phosphorylation, thereby preventing activation of JAK-STAT signaling pathway. May reduce immune responses by preventing the recruitment of the host PAF1 complex to interferon-responsive genes. The sequence is that of Genome polyprotein from Dengue virus type 2 (strain Jamaica/1409/1983) (DENV-2).